The following is a 446-amino-acid chain: tRNA wybutosine-synthesizing protein 2 homolog (446 aa).

Residues Ser-208, Lys-215, Glu-255, and 283–284 each bind S-adenosyl-L-methionine; that span reads DN.

This sequence belongs to the class I-like SAM-binding methyltransferase superfamily. TRM5/TYW2 family.

The catalysed reaction is 4-demethylwyosine(37) in tRNA(Phe) + S-adenosyl-L-methionine = 4-demethyl-7-[(3S)-3-amino-3-carboxypropyl]wyosine(37) in tRNA(Phe) + S-methyl-5'-thioadenosine + H(+). The protein operates within tRNA modification; wybutosine-tRNA(Phe) biosynthesis. Functionally, S-adenosyl-L-methionine-dependent transferase that acts as a component of the wybutosine biosynthesis pathway. Wybutosine is a hyper modified guanosine with a tricyclic base found at the 3'-position adjacent to the anticodon of eukaryotic phenylalanine tRNA. Catalyzes the transfer of the alpha-amino-alpha-carboxypropyl (acp) group from S-adenosyl-L-methionine to the C-7 position of 4-demethylwyosine (imG-14) to produce wybutosine-86. In Mus musculus (Mouse), this protein is tRNA wybutosine-synthesizing protein 2 homolog (Trmt12).